A 528-amino-acid chain; its full sequence is Glutamyl-tRNA(Gln) amidotransferase subunit A, mitochondrial (528 aa).

The Charge relay system role is filled by lysine 76. The interval 148–167 (YREKRKQNPHSENEDSDWLI) is disordered. Serine 171 (charge relay system) is an active-site residue. The Acyl-ester intermediate role is filled by serine 195.

It belongs to the amidase family. GatA subfamily. In terms of assembly, subunit of the heterotrimeric GatCAB amidotransferase (AdT) complex, composed of A (QRSL1), B (GATB) and C (GATC) subunits.

The protein resides in the mitochondrion. It carries out the reaction L-glutamyl-tRNA(Gln) + L-glutamine + ATP + H2O = L-glutaminyl-tRNA(Gln) + L-glutamate + ADP + phosphate + H(+). In terms of biological role, allows the formation of correctly charged Gln-tRNA(Gln) through the transamidation of misacylated Glu-tRNA(Gln) in the mitochondria. The reaction takes place in the presence of glutamine and ATP through an activated gamma-phospho-Glu-tRNA(Gln). This chain is Glutamyl-tRNA(Gln) amidotransferase subunit A, mitochondrial, found in Homo sapiens (Human).